The primary structure comprises 441 residues: uncharacterized protein (441 aa).

12 helical membrane passes run 21-41 (VVVA…MSLG), 51-71 (LGGG…AVAI), 94-114 (AAST…VTMS), 118-138 (VIPV…GVFA), 150-170 (VLTF…GGIF), 195-215 (AMLL…FVSY), 239-259 (QHIL…LYTG), 260-280 (SMII…VIAW), 291-311 (VHMM…AAVM), 334-354 (LAAL…GSSF), 363-383 (IYVP…ALVG), and 419-439 (VVPT…IAAM).

It is found in the cell membrane. This is an uncharacterized protein from Vibrio parahaemolyticus serotype O3:K6 (strain RIMD 2210633).